The primary structure comprises 396 residues: L-lactate dehydrogenase (396 aa).

An FMN hydroxy acid dehydrogenase domain is found at 1–380 (MIISAASDYR…TQDSLVQVLG (380 aa)). Y24 is a substrate binding site. FMN contacts are provided by S106 and Q127. Residue Y129 participates in substrate binding. T155 contributes to the FMN binding site. R164 contacts substrate. K251 serves as a coordination point for FMN. H275 functions as the Proton acceptor in the catalytic mechanism. R278 is a binding site for substrate. FMN is bound at residue 306–330 (DSGIRNGLDVVRMIALGADTVLLGR).

Belongs to the FMN-dependent alpha-hydroxy acid dehydrogenase family. Requires FMN as cofactor.

It localises to the cell inner membrane. It carries out the reaction (S)-lactate + A = pyruvate + AH2. Its function is as follows. Catalyzes the conversion of L-lactate to pyruvate. Is coupled to the respiratory chain. The sequence is that of L-lactate dehydrogenase from Escherichia coli O45:K1 (strain S88 / ExPEC).